The chain runs to 849 residues: Dopamine receptor 2 (849 aa).

Over 1–39 the chain is Extracellular; that stretch reads MEAGETWNVSLEWPPPSLDLSTITQTPSTIVGSGIPLNY. N8 is a glycosylation site (N-linked (GlcNAc...) asparagine). The chain crosses the membrane as a helical span at residues 40–60; that stretch reads AGLSLIVIPLITLLGNLLVII. Over 61–70 the chain is Cytoplasmic; sequence SVLRYRALQS. A helical transmembrane segment spans residues 71 to 91; sequence AINFLILGLAVADLLVAIIVM. At 92–112 the chain is on the extracellular side; it reads PYAVYVYVTNGDWYLGNLMCD. C111 and C190 form a disulfide bridge. A helical membrane pass occupies residues 113 to 133; that stretch reads IYMASDVCCSTASILLLAVIS. At 134 to 155 the chain is on the cytoplasmic side; the sequence is FDRYRAVSLPIQYSRQSQNVKR. The helical transmembrane segment at 156–176 threads the bilayer; that stretch reads VWTLIAVIWLVSLTLASPMVF. Over 177 to 203 the chain is Extracellular; sequence GVNVRPPDANPYECRFYNAEFSILSSM. The tract at residues 183 to 849 is required for the interaction with gpa-14; it reads PDANPYECRF…HHFSNKQAHV (667 aa). A helical transmembrane segment spans residues 204 to 224; the sequence is ISFVIPCFLVLFVYIRIIIAL. Topologically, residues 225–759 are cytoplasmic; the sequence is KKREKAAKMR…QRKEKRATKT (535 aa). The tract at residues 450–515 is disordered; the sequence is RRSSYADDSQ…NNSRTASITN (66 aa). The segment covering 457–470 has biased composition (low complexity); sequence DSQPTSSQTSSGDG. The span at 477–498 shows a compositional bias: basic residues; sequence GQKRFRNLSRNYSTKHHRKVVK. The segment covering 501–515 has biased composition (polar residues); it reads RGNSRNNSRTASITN. A helical transmembrane segment spans residues 760-780; sequence LGVVVGVFLVCWVPFFVINIL. Topologically, residues 781–798 are extracellular; that stretch reads NAVCILLNKDSCQVGYDL. Residues 799–819 form a helical membrane-spanning segment; it reads FFYCTWIGYMNSFMNPIIYTI. Residues 820–849 lie on the Cytoplasmic side of the membrane; that stretch reads FNTEFRRAFKSIIFGRNSTRHHFSNKQAHV.

This sequence belongs to the G-protein coupled receptor 1 family. Interacts (via C-terminus) with the G-alpha protein gpa-14; the interaction is direct. In terms of tissue distribution, expressed in all dopaminergic neurons. Expressed in neurons around the nerve ring and the posterior side of the body including PDE neurons. In hermaphrodites, expressed in the head and tail ganglia including in the RIA interneuron pair, and in a subset of sublateral interneurons and the PDA neuron in the tail. Expressed in cholinergic SIA neurons. Also expressed in the male tail. In males, expressed in the dorsal spicule protractor, ventral spicule protractor, dorsal spicule retractor and ventral spicule retractor muscles and the sensory post-cloacal sensilla B (PCB) neuron. In males, expressed in the sensory hook neurons HOA.

Its subcellular location is the cell membrane. G-protein coupled receptor which binds to the neurotransmitter dopamine with high affinity leading to the activation of an associated G-protein and downstream signaling pathways. Couples to G-proteins to inhibit adenylate cyclase (AC) activity and cAMP production. Inhibits synaptic vesicle fusion to negatively regulate the release of dopamine at dopaminergic neuron synapses. Antagonizes octopamine signaling in response to food by promoting the dopamine-mediated suppression of crh-1/CREB1 transcription factor activation in cholinergic SIA neurons. This is most likely in association with the G(o)-alpha G-protein subunit goa-1. In association with the G-alpha protein gpa-14, modulates two types of learning behavior: touch habituation and chemosensory associative conditioning. May act partly via tsp-17 to negatively regulate dopamine reuptake transporter dat-1 activity. Plays a role in behavioral plasticity and regulates the decision-making process when conflicting alternatives are present. Promotes male mating behavior by antagonizing acetylcholine signaling to control the protrusions of copulatory spicules from the tail of males during hermaphrodite vulval location. Modulates unc-7 activity at gap junctions to promote inhibitory neuronal signaling transduction between chemosensory and mechanosensory neurons, and thus ensures spicule insertion attempts are confined to the hermaphrodite vulva during copulation. Functionally, G-protein coupled receptor which binds to the neurotransmitter dopamine with high affinity leading to the activation of an associated G-protein and downstream signaling pathways. Couples to G-proteins to inhibit adenylate cyclase (AC) activity and cAMP production. The protein is Dopamine receptor 2 of Caenorhabditis elegans.